Consider the following 471-residue polypeptide: Sestrin-2 (471 aa).

Met-1 carries the N-acetylmethionine modification. The interval 57 to 230 (GLEALMSSGR…APSPPSEQST (174 aa)) is N-terminal domain; mediates the alkylhydroperoxide reductase activity. The Cysteine sulfenic acid (-SOH) intermediate role is filled by Cys-116. Residue Lys-166 forms a Glycyl lysine isopeptide (Lys-Gly) (interchain with G-Cter in ubiquitin) linkage. The tract at residues 212–241 (DPEGSPAPQAPSPPSEQSTPPSRDSLNHSG) is disordered. Ser-240 carries the post-translational modification Phosphoserine. Residues 299 to 471 (ANPDMLCFVE…ALRAITRYMT (173 aa)) are C-terminal domain; mediates TORC1 regulation. L-leucine is bound by residues 365–368 (TYNT), Thr-377, and Glu-442.

The protein belongs to the sestrin family. In terms of assembly, interacts with the GATOR2 complex which is composed of MIOS, SEC13, SEH1L, WDR24 and WDR59; the interaction is negatively regulated by leucine. Conveys leucine availability via direct interaction with SEH1L and WDR24 components of the GATOR2 complex. Interacts with RRAGA, RRAGB, RRAGC and RRAGD; may function as a guanine nucleotide dissociation inhibitor for RRAGs and regulate them. May interact with the TORC2 complex. Interacts with KEAP1, RBX1, SQSTM and ULK1; to regulate the degradation of KEAP1. May also associate with the complex composed of TSC1, TSC2 and the AMP-responsive protein kinase/AMPK to regulate TORC1 signaling. May interact with PRDX1. Post-translationally, phosphorylated by ULK1 at multiple sites. Ubiquitinated at Lys-166 by RNF167 via 'Lys-63'-linked polyubiquitination in response to leucine deprivation: ubiquitination promotes SESN2-interaction with the GATOR2 complex, leading to inhibit the TORC1 signaling pathway. Deubiquitinated at Lys-166 by STAMBPL1, promoting the TORC1 signaling pathway. Ubiquitinated by RNF186; ubiquitination mediates proteasomal degradation.

It localises to the cytoplasm. The catalysed reaction is a hydroperoxide + L-cysteinyl-[protein] = S-hydroxy-L-cysteinyl-[protein] + an alcohol. Its function is as follows. Functions as an intracellular leucine sensor that negatively regulates the mTORC1 signaling pathway through the GATOR complex. In absence of leucine, binds the GATOR subcomplex GATOR2 and prevents mTORC1 signaling. Binding of leucine to SESN2 disrupts its interaction with GATOR2 thereby activating the TORC1 signaling pathway. This stress-inducible metabolic regulator also plays a role in protection against oxidative and genotoxic stresses. May negatively regulate protein translation in response to endoplasmic reticulum stress, via mTORC1. May positively regulate the transcription by NFE2L2 of genes involved in the response to oxidative stress by facilitating the SQSTM1-mediated autophagic degradation of KEAP1. May also mediate TP53 inhibition of TORC1 signaling upon genotoxic stress. Moreover, may prevent the accumulation of reactive oxygen species (ROS) through the alkylhydroperoxide reductase activity born by the N-terminal domain of the protein. Was originally reported to contribute to oxidative stress resistance by reducing PRDX1. However, this could not be confirmed. The polypeptide is Sestrin-2 (Bos taurus (Bovine)).